A 154-amino-acid polypeptide reads, in one-letter code: Myoglobin (154 aa).

The region spanning 2–148 (GLSDGEWTLV…FRNDMAAQYK (147 aa)) is the Globin domain. Phosphoserine is present on Ser-4. Residue His-65 participates in nitrite binding. His-65 contributes to the O2 binding site. At Thr-68 the chain carries Phosphothreonine. Residue His-94 participates in heme b binding.

The protein belongs to the globin family. As to quaternary structure, monomeric.

Its subcellular location is the cytoplasm. It localises to the sarcoplasm. The catalysed reaction is Fe(III)-heme b-[protein] + nitric oxide + H2O = Fe(II)-heme b-[protein] + nitrite + 2 H(+). It catalyses the reaction H2O2 + AH2 = A + 2 H2O. Its function is as follows. Monomeric heme protein which primary function is to store oxygen and facilitate its diffusion within muscle tissues. Reversibly binds oxygen through a pentacoordinated heme iron and enables its timely and efficient release as needed during periods of heightened demand. Depending on the oxidative conditions of tissues and cells, and in addition to its ability to bind oxygen, it also has a nitrite reductase activity whereby it regulates the production of bioactive nitric oxide. Under stress conditions, like hypoxia and anoxia, it also protects cells against reactive oxygen species thanks to its pseudoperoxidase activity. The protein is Myoglobin of Capra hircus (Goat).